Here is an 859-residue protein sequence, read N- to C-terminus: DNA mismatch repair protein MutS (859 aa).

617 to 624 (GPNMGGKS) provides a ligand contact to ATP. The interval 799–821 (ETTSLPHEQPRAKPGKPAVPQQS) is disordered.

Belongs to the DNA mismatch repair MutS family.

Its function is as follows. This protein is involved in the repair of mismatches in DNA. It is possible that it carries out the mismatch recognition step. This protein has a weak ATPase activity. In Pseudomonas savastanoi pv. phaseolicola (strain 1448A / Race 6) (Pseudomonas syringae pv. phaseolicola (strain 1448A / Race 6)), this protein is DNA mismatch repair protein MutS.